The chain runs to 520 residues: Beta-galactoside-specific lectin 4 (520 aa).

Asn107 carries N-linked (GlcNAc...) asparagine glycosylation. The active site involves Glu159. The cysteines at positions 240 and 266 are disulfide-linked. Residues 241-265 (GERPSSSDVRYWPLVIRPVIADDVT) constitute a propeptide, connecting peptide. The region spanning 269–396 (SEPTVRIVGR…YTLGQGWLAG (128 aa)) is the Ricin B-type lectin 1 domain. Residue 284-286 (DVR) participates in D-galactose binding. Residue Asn322 is glycosylated (N-linked (GlcNAc...) asparagine). A disulfide bridge links Cys325 with Cys342. N-linked (GlcNAc...) asparagine glycans are attached at residues Asn357 and Asn397. In terms of domain architecture, Ricin B-type lectin 2 spans 400–520 (APREVTIYGF…KPNQMWLPVP (121 aa)). Intrachain disulfides connect Cys413–Cys426 and Cys451–Cys467. Residue 494–496 (DVA) participates in D-galactose binding.

It belongs to the ribosome-inactivating protein family. Type 2 RIP subfamily. As to quaternary structure, disulfide-linked dimer of A and B chains.

It catalyses the reaction Endohydrolysis of the N-glycosidic bond at one specific adenosine on the 28S rRNA.. Functionally, the A chain is responsible for inhibiting protein synthesis through the catalytic inactivation of 60S ribosomal subunits by removing adenine from position 4,324 of 28S rRNA. The B chain binds to cell receptors and probably facilitates the entry into the cell of the A chain; B chains are also responsible for cell agglutination (lectin activity). Inhibits growth of the human tumor cell line Molt4. The protein is Beta-galactoside-specific lectin 4 of Viscum album (European mistletoe).